Here is a 381-residue protein sequence, read N- to C-terminus: Prostatic acid phosphatase (381 aa).

The signal sequence occupies residues methionine 1 to alanine 31. Substrate is bound at residue arginine 42. Histidine 43 serves as the catalytic Nucleophile. Residue arginine 46 coordinates substrate. The N-linked (GlcNAc...) asparagine glycan is linked to asparagine 93. Substrate is bound at residue arginine 110. Disulfide bonds link cysteine 160/cysteine 371, cysteine 214/cysteine 312, and cysteine 346/cysteine 350. Residue asparagine 219 is glycosylated (N-linked (GlcNAc...) asparagine). Histidine 288 contributes to the substrate binding site. Catalysis depends on aspartate 289, which acts as the Proton donor. N-linked (GlcNAc...) asparagine glycosylation occurs at asparagine 332.

It belongs to the histidine acid phosphatase family. Homodimer; dimer formation is required for phosphatase activity. As to expression, expressed in salivary gland, thymus and thyroid gland. In terms of tissue distribution, widely expressed in prostate lobes, brain, kidney, liver, lung, muscle, placenta, salivary gland, spleen, thyroid and thymus. Locates to Schwann cells and fibroblasts. Expressed in peptidergic and non-peptidergic nociceptive (pain-sensing) neurons. Preferentially expressed in non-peptidergic doral root ganglia neurons.

The protein resides in the secreted. It is found in the cell membrane. It localises to the lysosome membrane. The catalysed reaction is a phosphate monoester + H2O = an alcohol + phosphate. The enzyme catalyses a ribonucleoside 5'-phosphate + H2O = a ribonucleoside + phosphate. It catalyses the reaction 1-(9Z-octadecenoyl)-sn-glycero-3-phosphate + H2O = 1-(9Z-octadecenoyl)-sn-glycerol + phosphate. It carries out the reaction O-phospho-L-tyrosyl-[protein] + H2O = L-tyrosyl-[protein] + phosphate. Functionally, a non-specific tyrosine phosphatase that dephosphorylates a diverse number of substrates under acidic conditions (pH 4-6) including alkyl, aryl, and acyl orthophosphate monoesters and phosphorylated proteins. Has lipid phosphatase activity and inactivates lysophosphatidic acid in seminal plasma. In terms of biological role, in addition to its tyrosine phosphatase activity, also has ecto-5'-nucleotidase activity in dorsal root ganglion (DRG) neurons. Generates adenosine from AMP. This extracellular adenosine leads to a decrease in chronic pain by activating A1R in nociceptive neurons. In Mus musculus (Mouse), this protein is Prostatic acid phosphatase (Acp3).